We begin with the raw amino-acid sequence, 171 residues long: Large ribosomal subunit protein uL10 (171 aa).

Belongs to the universal ribosomal protein uL10 family. Part of the ribosomal stalk of the 50S ribosomal subunit. The N-terminus interacts with L11 and the large rRNA to form the base of the stalk. The C-terminus forms an elongated spine to which L12 dimers bind in a sequential fashion forming a multimeric L10(L12)X complex.

Functionally, forms part of the ribosomal stalk, playing a central role in the interaction of the ribosome with GTP-bound translation factors. In Zymomonas mobilis subsp. mobilis (strain ATCC 31821 / ZM4 / CP4), this protein is Large ribosomal subunit protein uL10.